Reading from the N-terminus, the 6359-residue chain is Bacitracin synthase 3 (6359 aa).

The segment at 461-1034 (LHELFEEQAM…IKGLGEYIRS (574 aa)) is domain 1 (isoleucine-activating). The span at 941-953 (VDRKALPEPDRTA) shows a compositional bias: basic and acidic residues. The segment at 941–962 (VDRKALPEPDRTAGAENEYEAP) is disordered. Carrier domains follow at residues 961–1036 (APRN…RSTK), 1993–2067 (APRN…KKQS), 3497–3572 (APRN…ESMK), 4539–4613 (PPRN…KAES), and 6047–6122 (PPRH…KHAQ). S996, S2028, and S3532 each carry O-(pantetheine 4'-phosphoryl)serine. Positions 1517–2064 (FEDQTLTYRQ…RIKDLAKYVK (548 aa)) are domain 2 (D-phenylalanine-activating). Residues 2999 to 3570 (NKTIHQLFEE…IKDIGDFIES (572 aa)) form a domain 3 (histidine-activating) region. The domain 4 (D-aspartic acid-activating) stretch occupies residues 4047 to 4612 (EQTAVVYADE…KSLSRYVKAE (566 aa)). Residues 4521–4544 (IDTAALPEPQPGKETEYEPPRNET) are disordered. Positions 4531 to 4544 (PGKETEYEPPRNET) are enriched in basic and acidic residues. An O-(pantetheine 4'-phosphoryl)serine mark is found at S4574 and S6082. Residues 5549-6129 (IHRLFEEQAE…HAQDLLKDYT (581 aa)) form a domain 5 (asparagine-activating) region.

Belongs to the ATP-dependent AMP-binding enzyme family. In terms of assembly, large multienzyme complex of BA1, BA2 and BA3. The cofactor is pantetheine 4'-phosphate.

It catalyses the reaction L-aspartate = D-aspartate. The catalysed reaction is L-phenylalanine + ATP + H2O = D-phenylalanine + AMP + diphosphate + H(+). Its pathway is antibiotic biosynthesis; bacitracin biosynthesis. Induces peptide synthesis, activates and incorporates five amino acids, forms a thiazoline ring between the first two amino acids and incorporates a D-glutamine in the fourth position. The protein is Bacitracin synthase 3 (bacC) of Bacillus licheniformis.